The primary structure comprises 94 residues: Small ribosomal subunit protein bS16c (94 aa).

Belongs to the bacterial ribosomal protein bS16 family.

The protein localises to the plastid. It is found in the chloroplast. This is Small ribosomal subunit protein bS16c from Phalaenopsis aphrodite subsp. formosana (Moth orchid).